The chain runs to 549 residues: Hydroxylamine reductase (549 aa).

Positions 3, 6, 18, and 25 each coordinate [2Fe-2S] cluster. Residues histidine 248, glutamate 272, cysteine 316, cysteine 404, cysteine 432, cysteine 457, glutamate 491, and lysine 493 each contribute to the hybrid [4Fe-2O-2S] cluster site. At cysteine 404 the chain carries Cysteine persulfide.

The protein belongs to the HCP family. [2Fe-2S] cluster is required as a cofactor. It depends on hybrid [4Fe-2O-2S] cluster as a cofactor.

Its subcellular location is the cytoplasm. The enzyme catalyses A + NH4(+) + H2O = hydroxylamine + AH2 + H(+). Catalyzes the reduction of hydroxylamine to form NH(3) and H(2)O. The sequence is that of Hydroxylamine reductase from Aeromonas hydrophila subsp. hydrophila (strain ATCC 7966 / DSM 30187 / BCRC 13018 / CCUG 14551 / JCM 1027 / KCTC 2358 / NCIMB 9240 / NCTC 8049).